Consider the following 243-residue polypeptide: Purine nucleoside phosphorylase YfiH (243 aa).

Residues H71, C107, and H124 each contribute to the Zn(2+) site.

The protein belongs to the purine nucleoside phosphorylase YfiH/LACC1 family. Homodimer. Cu(2+) is required as a cofactor. The cofactor is Zn(2+).

The enzyme catalyses adenosine + phosphate = alpha-D-ribose 1-phosphate + adenine. It carries out the reaction S-methyl-5'-thioadenosine + phosphate = 5-(methylsulfanyl)-alpha-D-ribose 1-phosphate + adenine. It catalyses the reaction inosine + phosphate = alpha-D-ribose 1-phosphate + hypoxanthine. The catalysed reaction is adenosine + H2O + H(+) = inosine + NH4(+). In terms of biological role, purine nucleoside enzyme that catalyzes the phosphorolysis of adenosine and inosine nucleosides, yielding D-ribose 1-phosphate and the respective free bases, adenine and hypoxanthine. Also catalyzes the phosphorolysis of S-methyl-5'-thioadenosine into adenine and S-methyl-5-thio-alpha-D-ribose 1-phosphate. Also has adenosine deaminase activity. May also act as a polyphenol oxidase: able to oxidize syringaldazine and 2,2'-azino-bis(3-ethylbenzthiazoline-6-sulfonic acid) (ABTS) in vitro. The protein is Purine nucleoside phosphorylase YfiH of Escherichia coli (strain K12).